Consider the following 589-residue polypeptide: Cell fusion protein aff-1 (589 aa).

Residues Met-1 to Ala-20 form the signal peptide. Over Arg-21–Trp-537 the chain is Extracellular. Residues Asn-58, Asn-138, Asn-205, Asn-335, Asn-382, Asn-392, and Asn-408 are each glycosylated (N-linked (GlcNAc...) asparagine). A helical membrane pass occupies residues Leu-538–Phe-558. Topologically, residues Thr-559–Tyr-589 are cytoplasmic.

This sequence belongs to the EFF/AFF cell fusogen family. Expressed in amphid sheath cells.

It localises to the cell membrane. The protein localises to the apical cell membrane. Its function is as follows. Required for cell fusion events during development including the fusion of anchor cells (AC), vulval A and vulval D rings, and late epidermal seam cells. Required for amphid sheath cell fusion induced by entry into dauer stage. The sequence is that of Cell fusion protein aff-1 from Caenorhabditis elegans.